The primary structure comprises 450 residues: Phosphoglucosamine mutase 2 (450 aa).

Serine 101 acts as the Phosphoserine intermediate in catalysis. Residues serine 101, aspartate 245, aspartate 247, and aspartate 249 each coordinate Mg(2+). Serine 101 is subject to Phosphoserine.

This sequence belongs to the phosphohexose mutase family. It depends on Mg(2+) as a cofactor. Activated by phosphorylation.

It catalyses the reaction alpha-D-glucosamine 1-phosphate = D-glucosamine 6-phosphate. Its function is as follows. Catalyzes the conversion of glucosamine-6-phosphate to glucosamine-1-phosphate. This Shewanella frigidimarina (strain NCIMB 400) protein is Phosphoglucosamine mutase 2.